The following is an 877-amino-acid chain: Polycomb protein Scm (877 aa).

The disordered stretch occupies residues 1–57; that stretch reads MSGGRDSSTSSGSNSAAPGASTNATSSASASASSTSTSASPGSTTSPASTQRQRGRP. Over residues 7-50 the composition is skewed to low complexity; sequence SSTSSGSNSAAPGASTNATSSASASASSTSTSASPGSTTSPAST. Residues 54–93 form an FCS-type zinc finger; it reads RGRPAKRATCTWCGEGKLPLQYVLPTQTGKKEFCSETCIA. Zn(2+) contacts are provided by Cys-63, Cys-66, Cys-87, and Cys-91. MBT repeat units lie at residues 175–273 and 281–382; these read FDWD…LQPP and SSWP…MQPP. 3 disordered regions span residues 535–621, 652–692, and 713–735; these read NSRK…SNKV, TNTN…GGSA, and ANVKPSNSYYKSPTTLSSSASLP. A Phosphothreonine modification is found at Thr-546. 2 positions are modified to phosphoserine: Ser-549 and Ser-550. Residues 560-569 show a composition bias toward polar residues; that stretch reads QSNSATTSPS. At Ser-585 the chain carries Phosphoserine. Residues 598–620 are compositionally biased toward low complexity; it reads ASQQNSNHSLNNNNNSASKSSNK. Low complexity predominate over residues 724–735; it reads SPTTLSSSASLP. Positions 806–876 constitute an SAM domain; it reads WTIEEVIQYI…KVNGRRNNLA (71 aa).

This sequence belongs to the SCM family. Scm associates with the PRC1 core complex containing PSC, PC, PH and Sce/RING1. Forms homotypic and heterotypic interactions. Interacts with the SAM domain of ph-p via its SAM domain in vitro. Interacts with corto in vitro.

Its subcellular location is the nucleus. Its function is as follows. Polycomb group (PcG) protein. PcG proteins act by forming multiprotein complexes, which are required to maintain the transcriptionally repressive state of homeotic genes throughout development. PcG proteins are not required to initiate repression, but to maintain it during later stages of development. They probably act via the methylation of histones, rendering chromatin heritably changed in its expressibility. The sequence is that of Polycomb protein Scm from Drosophila melanogaster (Fruit fly).